The following is a 260-amino-acid chain: Triosephosphate isomerase (260 aa).

11–13 contributes to the substrate binding site; it reads NWK. Catalysis depends on His103, which acts as the Electrophile. Glu175 serves as the catalytic Proton acceptor. Residues Gly181, Ser220, and 241–242 each bind substrate; that span reads GG.

This sequence belongs to the triosephosphate isomerase family. In terms of assembly, homodimer.

The protein resides in the cytoplasm. The catalysed reaction is D-glyceraldehyde 3-phosphate = dihydroxyacetone phosphate. Its pathway is carbohydrate biosynthesis; gluconeogenesis. It participates in carbohydrate degradation; glycolysis; D-glyceraldehyde 3-phosphate from glycerone phosphate: step 1/1. Functionally, involved in the gluconeogenesis. Catalyzes stereospecifically the conversion of dihydroxyacetone phosphate (DHAP) to D-glyceraldehyde-3-phosphate (G3P). The protein is Triosephosphate isomerase of Shewanella sp. (strain MR-7).